The primary structure comprises 367 residues: Probable protein phosphatase 2C 67 (367 aa).

The tract at residues 1-79 is disordered; it reads MAHQKREATS…DEKAATNSNV (79 aa). Residues 31 to 46 are compositionally biased toward basic and acidic residues; it reads AEKEHILTSDASHETN. The PPM-type phosphatase domain occupies 91 to 365; it reads EADAAEDKGC…DNCTAVLIVF (275 aa). The Mn(2+) site is built by Asp131, Gly132, Asp312, and Asp356.

The protein belongs to the PP2C family. The cofactor is Mg(2+). Requires Mn(2+) as cofactor.

It catalyses the reaction O-phospho-L-seryl-[protein] + H2O = L-seryl-[protein] + phosphate. The enzyme catalyses O-phospho-L-threonyl-[protein] + H2O = L-threonyl-[protein] + phosphate. This chain is Probable protein phosphatase 2C 67, found in Oryza sativa subsp. japonica (Rice).